We begin with the raw amino-acid sequence, 206 residues long: Large ribosomal subunit protein uL4 (206 aa).

This sequence belongs to the universal ribosomal protein uL4 family. As to quaternary structure, part of the 50S ribosomal subunit.

One of the primary rRNA binding proteins, this protein initially binds near the 5'-end of the 23S rRNA. It is important during the early stages of 50S assembly. It makes multiple contacts with different domains of the 23S rRNA in the assembled 50S subunit and ribosome. In terms of biological role, forms part of the polypeptide exit tunnel. In Methylorubrum extorquens (strain CM4 / NCIMB 13688) (Methylobacterium extorquens), this protein is Large ribosomal subunit protein uL4.